The sequence spans 32 residues: Photosystem II reaction center protein Z (32 aa).

A helical membrane pass occupies residues 9 to 29 (IIFSGSLIWVFLLIIVGFLNY).

The protein belongs to the PsbZ family. In terms of assembly, PSII is composed of 1 copy each of membrane proteins PsbA, PsbB, PsbC, PsbD, PsbE, PsbF, PsbH, PsbI, PsbJ, PsbK, PsbL, PsbM, PsbT, PsbY, PsbZ, Psb30/Ycf12, at least 3 peripheral proteins of the oxygen-evolving complex and a large number of cofactors. It forms dimeric complexes.

The protein localises to the plastid. The protein resides in the chloroplast thylakoid membrane. In terms of biological role, may control the interaction of photosystem II (PSII) cores with the light-harvesting antenna, regulates electron flow through the 2 photosystem reaction centers. PSII is a light-driven water plastoquinone oxidoreductase, using light energy to abstract electrons from H(2)O, generating a proton gradient subsequently used for ATP formation. This is Photosystem II reaction center protein Z from Euglena myxocylindracea.